Consider the following 955-residue polypeptide: RNA polymerase-associated protein RapA (955 aa).

A Helicase ATP-binding domain is found at Glu-163–Glu-333. An ATP-binding site is contributed by Asp-176–Thr-183. Residues Asp-279 to His-282 carry the DEAH box motif. The Helicase C-terminal domain maps to Arg-478 to Leu-642.

It belongs to the SNF2/RAD54 helicase family. RapA subfamily. As to quaternary structure, interacts with the RNAP. Has a higher affinity for the core RNAP than for the holoenzyme. Its ATPase activity is stimulated by binding to RNAP.

Its function is as follows. Transcription regulator that activates transcription by stimulating RNA polymerase (RNAP) recycling in case of stress conditions such as supercoiled DNA or high salt concentrations. Probably acts by releasing the RNAP, when it is trapped or immobilized on tightly supercoiled DNA. Does not activate transcription on linear DNA. Probably not involved in DNA repair. This Aeromonas hydrophila subsp. hydrophila (strain ATCC 7966 / DSM 30187 / BCRC 13018 / CCUG 14551 / JCM 1027 / KCTC 2358 / NCIMB 9240 / NCTC 8049) protein is RNA polymerase-associated protein RapA.